The following is a 260-amino-acid chain: MSIHLVIIDALNLIRRVHSAQPDPTDIARTITTTQRTLTRILSEAKPTHIIAVFDHHEQDRGWRAEILPDYKQNRKPMPEPLMQGLDAIQQAWWEQGIDSLLSEGDEADDLVATLATKVASHGEKVTIVSTDKGYCQLLSPTLQIRDYFQHRWLDEPFIEKEFGVKPSQLADYWGLTGISSSQVPGVPGIGPKAAKEILTQFEDIEAAYASDELAPKYRKKLDEHIESARLCKRVAALKCDIELGFNLQDIRFTGPNKAE.

Residue Asp-109 coordinates Mg(2+). The 5'-3' exonuclease domain maps to 165–259; sequence VKPSQLADYW…DIRFTGPNKA (95 aa). Leu-176, Pro-185, Val-187, and Ile-190 together coordinate K(+). The tract at residues 189–194 is interaction with DNA; that stretch reads GIGPKA.

This sequence belongs to the Xni family. It depends on Mg(2+) as a cofactor. K(+) serves as cofactor.

In terms of biological role, has flap endonuclease activity. During DNA replication, flap endonucleases cleave the 5'-overhanging flap structure that is generated by displacement synthesis when DNA polymerase encounters the 5'-end of a downstream Okazaki fragment. The polypeptide is Flap endonuclease Xni (Vibrio parahaemolyticus serotype O3:K6 (strain RIMD 2210633)).